The chain runs to 463 residues: L-seryl-tRNA(Sec) selenium transferase (463 aa).

Position 295 is an N6-(pyridoxal phosphate)lysine (Lys-295).

This sequence belongs to the SelA family. Homodecamer; pentamer of dimers. Binds only one seryl-tRNA(Sec) per dimer. It depends on pyridoxal 5'-phosphate as a cofactor.

It localises to the cytoplasm. It catalyses the reaction L-seryl-tRNA(Sec) + selenophosphate + H(+) = L-selenocysteinyl-tRNA(Sec) + phosphate. It participates in aminoacyl-tRNA biosynthesis; selenocysteinyl-tRNA(Sec) biosynthesis; selenocysteinyl-tRNA(Sec) from L-seryl-tRNA(Sec) (bacterial route): step 1/1. Converts seryl-tRNA(Sec) to selenocysteinyl-tRNA(Sec) required for selenoprotein biosynthesis. The sequence is that of L-seryl-tRNA(Sec) selenium transferase from Proteus mirabilis (strain HI4320).